The sequence spans 424 residues: L-rhamnose isomerase (424 aa).

His-261, Asp-293, and Asp-295 together coordinate Mn(2+).

The protein belongs to the rhamnose isomerase family. Mn(2+) serves as cofactor.

The protein localises to the cytoplasm. It carries out the reaction L-rhamnopyranose = L-rhamnulose. The protein operates within carbohydrate degradation; L-rhamnose degradation; glycerone phosphate from L-rhamnose: step 1/3. Catalyzes the interconversion of L-rhamnose and L-rhamnulose. The protein is L-rhamnose isomerase of Bacillus subtilis (strain 168).